Consider the following 452-residue polypeptide: GTPase Obg (452 aa).

One can recognise an Obg domain in the interval 1–158 (MFIDRAKIYV…KWIVLELKVM (158 aa)). 2 disordered regions span residues 66–87 (GKRG…DKVI) and 117–143 (AEGG…SEDG). Residues 159-338 (AEVGLIGYPN…LLDFVAEKVA (180 aa)) enclose the OBG-type G domain. GTP contacts are provided by residues 165 to 172 (GYPNVGKS), 190 to 194 (FTTLN), 212 to 215 (DIPG), 282 to 285 (NKMD), and 319 to 321 (SAA). Mg(2+) contacts are provided by serine 172 and threonine 192. Positions 376 to 452 (IEEKPKSDFG…KIGNVEFEYQ (77 aa)) constitute an OCT domain.

The protein belongs to the TRAFAC class OBG-HflX-like GTPase superfamily. OBG GTPase family. As to quaternary structure, monomer. Requires Mg(2+) as cofactor.

It localises to the cytoplasm. An essential GTPase which binds GTP, GDP and possibly (p)ppGpp with moderate affinity, with high nucleotide exchange rates and a fairly low GTP hydrolysis rate. Plays a role in control of the cell cycle, stress response, ribosome biogenesis and in those bacteria that undergo differentiation, in morphogenesis control. This is GTPase Obg from Natranaerobius thermophilus (strain ATCC BAA-1301 / DSM 18059 / JW/NM-WN-LF).